The primary structure comprises 509 residues: Pyruvate kinase (509 aa).

Ser-29 is modified (phosphoserine). Arg-56 contacts substrate. K(+) is bound by residues Asn-58 and Ser-60. Position 58-61 (58-61 (NFSH)) interacts with ATP. The residue at position 63 (Ser-63) is a Phosphoserine. Residues Asp-91 and Thr-92 each coordinate K(+). ATP-binding residues include Arg-98 and Lys-184. Residue Glu-249 participates in Mg(2+) binding. 2 residues coordinate substrate: Gly-272 and Asp-273. Residue Asp-273 coordinates Mg(2+). Ser-281 carries the phosphoserine modification. Residue Thr-305 coordinates substrate. Position 412 is a phosphoserine (Ser-412).

This sequence belongs to the pyruvate kinase family. Homotetramer. The cofactor is Mg(2+). Requires K(+) as cofactor.

The enzyme catalyses pyruvate + ATP = phosphoenolpyruvate + ADP + H(+). It participates in carbohydrate degradation; glycolysis; pyruvate from D-glyceraldehyde 3-phosphate: step 5/5. This Schizosaccharomyces pombe (strain 972 / ATCC 24843) (Fission yeast) protein is Pyruvate kinase (pyk1).